The primary structure comprises 323 residues: Mycothiol acetyltransferase (323 aa).

2 consecutive N-acetyltransferase domains span residues 5-145 (LTTD…LPLR) and 168-323 (VEIR…PEER). 1D-myo-inositol 2-(L-cysteinylamino)-2-deoxy-alpha-D-glucopyranoside is bound at residue Glu36. Acetyl-CoA is bound at residue 83-85 (VAV). Residues Glu195, Lys236, and Glu252 each contribute to the 1D-myo-inositol 2-(L-cysteinylamino)-2-deoxy-alpha-D-glucopyranoside site. Residues 256–258 (VGV) and 263–269 (QGSGLGR) each bind acetyl-CoA. Residue Tyr290 coordinates 1D-myo-inositol 2-(L-cysteinylamino)-2-deoxy-alpha-D-glucopyranoside. Acetyl-CoA is bound at residue 295-300 (NRPAVQ).

This sequence belongs to the acetyltransferase family. MshD subfamily. As to quaternary structure, monomer.

The enzyme catalyses 1D-myo-inositol 2-(L-cysteinylamino)-2-deoxy-alpha-D-glucopyranoside + acetyl-CoA = mycothiol + CoA + H(+). In terms of biological role, catalyzes the transfer of acetyl from acetyl-CoA to desacetylmycothiol (Cys-GlcN-Ins) to form mycothiol. This is Mycothiol acetyltransferase from Thermobifida fusca (strain YX).